The chain runs to 325 residues: MSETATWQPSAPIPNLLKRAAVMAEIRRFFTDRGVLEVETPCMSQATVTDIHLFPFETRFVGPGHSQGLNLYLMTSPEYHMKRLLAAGCGPVFQLCRSFRNEEMGRHHNPEFTMLEWYRPCYDMYRLINEVDDLLQQVLECQPAESLSYQQAFQRHLDIDPLSADKTQLREVAAKLDLSNIADTEEDRDTLLQLLFTMGVEPHIGKDRPTFIYHFPATQASLAQISPEDHRVAERFEVYYKGIELANGFHELTDAREQRLRFEQDNRKRAARGLPQQPIDNNLLAALEAGLPDCSGVALGVDRVVMLALGAESIGEVIAFTVDRA.

76-78 provides a ligand contact to substrate; that stretch reads SPE. Residues 100 to 102 and Asn-109 each bind ATP; that span reads RNE. Position 118 (Tyr-118) interacts with substrate. 244-245 provides a ligand contact to ATP; it reads EL. Glu-251 contributes to the substrate binding site. Gly-300 serves as a coordination point for ATP.

This sequence belongs to the class-II aminoacyl-tRNA synthetase family. EpmA subfamily. Homodimer.

It carries out the reaction D-beta-lysine + L-lysyl-[protein] + ATP = N(6)-((3R)-3,6-diaminohexanoyl)-L-lysyl-[protein] + AMP + diphosphate + H(+). With EpmB is involved in the beta-lysylation step of the post-translational modification of translation elongation factor P (EF-P). Catalyzes the ATP-dependent activation of (R)-beta-lysine produced by EpmB, forming a lysyl-adenylate, from which the beta-lysyl moiety is then transferred to the epsilon-amino group of a conserved specific lysine residue in EF-P. The chain is Elongation factor P--(R)-beta-lysine ligase from Klebsiella pneumoniae (strain 342).